Consider the following 75-residue polypeptide: U6-lycotoxin-Ls1f (75 aa).

Positions 1 to 21 (MKLLLFTALVLVVISLVEVEA) are cleaved as a signal peptide. Positions 22–25 (ENER) are excised as a propeptide.

This sequence belongs to the neurotoxin 19 (CSTX) family. 06 (U6-Lctx) subfamily. In terms of processing, contains 4 disulfide bonds. Expressed by the venom gland.

The protein localises to the secreted. The protein is U6-lycotoxin-Ls1f of Lycosa singoriensis (Wolf spider).